Here is a 217-residue protein sequence, read N- to C-terminus: Phosphatidylserine decarboxylase proenzyme (217 aa).

The Schiff-base intermediate with substrate; via pyruvic acid role is filled by Ser182. Ser182 is subject to Pyruvic acid (Ser); by autocatalysis.

Belongs to the phosphatidylserine decarboxylase family. PSD-A subfamily. Heterodimer of a large membrane-associated beta subunit and a small pyruvoyl-containing alpha subunit. The cofactor is pyruvate. Post-translationally, is synthesized initially as an inactive proenzyme. Formation of the active enzyme involves a self-maturation process in which the active site pyruvoyl group is generated from an internal serine residue via an autocatalytic post-translational modification. Two non-identical subunits are generated from the proenzyme in this reaction, and the pyruvate is formed at the N-terminus of the alpha chain, which is derived from the carboxyl end of the proenzyme. The post-translation cleavage follows an unusual pathway, termed non-hydrolytic serinolysis, in which the side chain hydroxyl group of the serine supplies its oxygen atom to form the C-terminus of the beta chain, while the remainder of the serine residue undergoes an oxidative deamination to produce ammonia and the pyruvoyl prosthetic group on the alpha chain.

It is found in the cell membrane. The catalysed reaction is a 1,2-diacyl-sn-glycero-3-phospho-L-serine + H(+) = a 1,2-diacyl-sn-glycero-3-phosphoethanolamine + CO2. It participates in phospholipid metabolism; phosphatidylethanolamine biosynthesis; phosphatidylethanolamine from CDP-diacylglycerol: step 2/2. Catalyzes the formation of phosphatidylethanolamine (PtdEtn) from phosphatidylserine (PtdSer). This chain is Phosphatidylserine decarboxylase proenzyme, found in Prosthecochloris aestuarii (strain DSM 271 / SK 413).